The sequence spans 435 residues: ATP-dependent protease ATPase subunit HslU (435 aa).

ATP-binding positions include I18, 60 to 65 (GVGKTE), D248, E313, and R385.

This sequence belongs to the ClpX chaperone family. HslU subfamily. In terms of assembly, a double ring-shaped homohexamer of HslV is capped on each side by a ring-shaped HslU homohexamer. The assembly of the HslU/HslV complex is dependent on binding of ATP.

The protein localises to the cytoplasm. In terms of biological role, ATPase subunit of a proteasome-like degradation complex; this subunit has chaperone activity. The binding of ATP and its subsequent hydrolysis by HslU are essential for unfolding of protein substrates subsequently hydrolyzed by HslV. HslU recognizes the N-terminal part of its protein substrates and unfolds these before they are guided to HslV for hydrolysis. This is ATP-dependent protease ATPase subunit HslU from Rhizobium meliloti (strain 1021) (Ensifer meliloti).